Consider the following 373-residue polypeptide: Leucine aminopeptidase 1 (373 aa).

Positions 1–18 (MKLLSVLALSATATSVLG) are cleaved as a signal peptide. Zn(2+) is bound by residues His176 and Asp195. N-linked (GlcNAc...) asparagine glycosylation occurs at Asn196. Glu234 and Asp261 together coordinate Zn(2+). A glycan (N-linked (GlcNAc...) asparagine) is linked at Asn288. A disulfide bond links Cys310 and Cys314. Residue His343 coordinates Zn(2+). The N-linked (GlcNAc...) asparagine glycan is linked to Asn348.

Belongs to the peptidase M28 family. M28E subfamily. In terms of assembly, monomer. The cofactor is Zn(2+).

Its subcellular location is the secreted. Activity is inhibited by EDTA, o-phenanthroline, bestatin and amastatin. Its function is as follows. Extracellular aminopeptidase which contributes to pathogenicity. The polypeptide is Leucine aminopeptidase 1 (LAP1) (Trichophyton rubrum (Athlete's foot fungus)).